Consider the following 189-residue polypeptide: Small heat shock protein 21 (189 aa).

The tract at residues 26–53 (PPNFNPRKIAQGDNGKGQQVSRYGAGAG) is disordered. The 107-residue stretch at 77–183 (KYFVGFDDNV…HEKIVNIPIS (107 aa)) folds into the sHSP domain.

The protein belongs to the small heat shock protein (HSP20) family.

In terms of biological role, heat shock protein required for pathogenicity. Mediates thermotolerance and adaptation to oxidative stress and ethanol-induced stress. Required for invasive growth and filament formation under various filament inducing conditions. Plays a role in the capacity of damaging human-derived endothelial and oral epithelial cells during infection. Potentiates resistance to antifungal drugs, as well as resistance to killing by human neutrophils. Plays a major role in trehalose homeostasis in response to elevated temperatures. Regulates CEK1 activation by phosphorylation in response to elevated temperatures. This Candida albicans (strain SC5314 / ATCC MYA-2876) (Yeast) protein is Small heat shock protein 21 (HSP21).